We begin with the raw amino-acid sequence, 659 residues long: 3-hydroxypropionyl-coenzyme A synthetase (659 aa).

Asp525 is an active-site residue. Residue Lys616 is modified to N6-acetyllysine.

This sequence belongs to the ATP-dependent AMP-binding enzyme family.

The catalysed reaction is 3-hydroxypropanoate + ATP + CoA = 3-hydroxypropanoyl-CoA + AMP + diphosphate. Its function is as follows. Plays a role in the autotrophic CO(2) fixation pathway. Activates 3-hydroxypropionate to its CoA ester. Can also activate propionate, and to a lesser extent acrylate, acetate and butyrate. This chain is 3-hydroxypropionyl-coenzyme A synthetase, found in Sulfurisphaera tokodaii (strain DSM 16993 / JCM 10545 / NBRC 100140 / 7) (Sulfolobus tokodaii).